The sequence spans 21 residues: Peptidyl-prolyl cis-trans isomerase (21 aa).

A disordered region spans residues 1 to 21 (ENFKIKHTEPGLLSMANAGKN).

The protein belongs to the cyclophilin-type PPIase family. PPIase A subfamily.

It catalyses the reaction [protein]-peptidylproline (omega=180) = [protein]-peptidylproline (omega=0). Its function is as follows. PPIases accelerate the folding of proteins. It catalyzes the cis-trans isomerization of proline imidic peptide bonds in oligopeptides. The protein is Peptidyl-prolyl cis-trans isomerase of Naegleria fowleri (Brain eating amoeba).